We begin with the raw amino-acid sequence, 341 residues long: Enduracididine beta-hydroxylase (341 aa).

Fe cation contacts are provided by His-146 and Glu-148. Positions 203–223 are disordered; that stretch reads HRIHGKAPGDESARESALRER. His-300 lines the Fe cation pocket.

It belongs to the clavaminate synthase family. Fe(2+) serves as cofactor.

It catalyses the reaction L-enduracididine + 2-oxoglutarate + O2 = (3S)-3-hydroxy-L-enduracididine + succinate + CO2. The protein operates within antibiotic biosynthesis. Functionally, hydroxylates the beta carbon of free L-enduracididine to produce (3S)-3-hydroxy-L-enduracididine in biosynthesis of the nonproteinogenic amino acid beta-hydroxyenduracididine, a component of antibiotic mannopeptimycin. The sequence is that of Enduracididine beta-hydroxylase (mppO) from Streptomyces hygroscopicus.